The sequence spans 672 residues: MNVLSSICYGGDYNPEQWPEEIWYEDAKLMQKAGVNLVSLGIFSWSKIEPSDGVFDFEWLDKVIDILYDHGVYINLGTATATTPAWFVKKYPDSLPIDESGVIFSFGSRQHYCPNHPQLITHIKRLVRAIAERYKNHPALKMWHVNNEYACHVSKCFCENCAVAFRKWLKERYKTIDELNERWGTNFWGQRYNHWDEINPPRKAPTFINPSQELDYYRFMNDSILKLFLTEKEILRGVTPDIPVSTNFMGSFKPLNYFQWAQHVDIVTWDSYPDPREGLPIQHAMMNDLMRSLRKGQPFILMEQVTSHVNWRDINVPKPPGVMRLWSYATIARGADGIMFFQWRQSRAGAEKFHGAMVPHFLNENNRIYREVTQLGQELKKLDCLVGSRIKAEVAIIFDWENWWAVELSSKPHNKLRYIPIVEAYYRELYKRNIAVDFVRPSDDLTKYKVVIAPMLYMVKEGEDENLRQFVANGGTLIVSFFSGIVDENDRVHLGGYPGPLRDILGIFVEEFVPYPETKVNKIYSNDGEYDCTTWADIIRLEGAEPLATFKGDWYAGLPAVTRNCYGKGEGIYVGTYPDSNYLGRLLEQVFAKHHINPILEVAENVEVQQRETDEWKYLIIINHNDYEVTLSLPEDKIYQNMIDGKCFRGGELRIQGVDVAVLREHDEAGKV.

Arginine 109 lines the substrate pocket. Cysteine 113 contributes to the Zn(2+) binding site. Position 147 (asparagine 147) interacts with substrate. Glutamate 148 serves as the catalytic Proton donor. The Zn(2+) site is built by cysteine 156, cysteine 158, and cysteine 161. The active-site Nucleophile is glutamate 303. Residues tryptophan 311 and 351–354 (EKFH) each bind substrate.

It belongs to the glycosyl hydrolase 42 family.

It carries out the reaction Hydrolysis of terminal non-reducing beta-D-galactose residues in beta-D-galactosides.. This is Beta-galactosidase BgaB from Geobacillus sp. (strain Y412MC61).